Here is a 346-residue protein sequence, read N- to C-terminus: MARHPRWTLSQVTELFEKPLLELLFEAQQIHRQHFDPQQVQVSTLLSIKTGACPEDCKYCPQSSRYKTGLEAERLMAVEQVLDSARKAKNAGSTRFCMGAAWKNPHERDMPYLEQIVQGVKAMGLETCMTLGMLNESQAQRLANAGLDYYNHNLDTSPEFYGNIITTRTYQERLDTLEKVREAGIKVCSGGIVGLGETVTDRAGLLLQLANLPTPPESVPINMLVKVKGTPLADNDDVDAFDFIRTIAVARIMMPTSYVRLSAGREQMNEQTQAMCFMAGANSIFYGCKLLTTPNPAEDKDLQLFRKLGLNPQQTRVLAGDNEQQQRLEQTLMTPDTDDYYNAAAL.

Residues 38-256 (QQVQVSTLLS…IAVARIMMPT (219 aa)) form the Radical SAM core domain. Residues C53, C57, and C60 each coordinate [4Fe-4S] cluster. Residues C97, C128, C188, and R260 each coordinate [2Fe-2S] cluster.

The protein belongs to the radical SAM superfamily. Biotin synthase family. As to quaternary structure, homodimer. Requires [4Fe-4S] cluster as cofactor. [2Fe-2S] cluster serves as cofactor.

It catalyses the reaction (4R,5S)-dethiobiotin + (sulfur carrier)-SH + 2 reduced [2Fe-2S]-[ferredoxin] + 2 S-adenosyl-L-methionine = (sulfur carrier)-H + biotin + 2 5'-deoxyadenosine + 2 L-methionine + 2 oxidized [2Fe-2S]-[ferredoxin]. Its pathway is cofactor biosynthesis; biotin biosynthesis; biotin from 7,8-diaminononanoate: step 2/2. Catalyzes the conversion of dethiobiotin (DTB) to biotin by the insertion of a sulfur atom into dethiobiotin via a radical-based mechanism. The chain is Biotin synthase from Salmonella gallinarum (strain 287/91 / NCTC 13346).